Reading from the N-terminus, the 165-residue chain is Type 3 secretion system regulator YopR (165 aa).

This sequence belongs to the YopR family.

It localises to the secreted. In terms of biological role, may be involved in the regulation of the assembly of the type III secretion system (T3SS), also called injectisome, which is used to inject bacterial effector proteins into eukaryotic host cells. May control the secretion and/or polymerization of YscF/SctF, the principal component of the needle filament, thereby impacting the assembly of the T3SS. Involved in pathogenesis. This Yersinia pseudotuberculosis serotype I (strain IP32953) protein is Type 3 secretion system regulator YopR.